Consider the following 1137-residue polypeptide: MSQGPRTCSLLLVLLLSHGGAYQREPSPRQDLHPLLQKMAEEIIEGSYLNALLDLTLFERSHVWTADLSHRVLAYLNSKNVAFTIPSLQAVMEAHLEQYLYQPQKLLEDLRATDNQQFHTAMKCLLEDKWGHLDLEDVVINLGDIRDEALQSPGVNRSLFLITLERCFQVLNALECVEVLGRVLRGSSGSFLQPDITERLPQDLHEDAFKNLSAVFKDLYDQTSAHTQRALYSWMTGILRTPFNVTDGSVSWVSAEKLWILGRYMVHLSFEEIMNISPIEIGLFISYDNATKQLDMVYDITPELAQAFLERIRCSSFDVRNISTIHRLGLLVCFYDGLELLDATLAQVLLHQMLKCSRLRGFQAGVQKLKANLLDIATENQTLNETLGSLSDAVVGLTSSQLESLSSDAVHSAISTLNQVTGWGRSQIVILSAKYLAQEKVLSFYNVCQMGVLLAGVGTQAFYSMDHKDLWQVLRSPLSQDMSDLSPVQQQGVLGKLMEAEDATSGIAEVPRALFKEVSLYDLWKESRFNATVLKAKELRRSQALFLYEFLGKTTERPEELLSAGQLVKGVPCSHIDAMSDHLFLALFQYFDNNFSLLSPDQVNCLAWKYWEVSRSSMPPFLLATLPSRFLSSIPPSRCVRFLISLGKRRLETLVLDSDKRSVVVRKVQQCLDGVIADEYTVDIVGHLLCHLPASFIERGISPRAWAAALHGLRSCTALSSEQKAAVRVRLLEQWGPPENWTAETTKDLAPFLAFFSGDELHTVATKFPEILQQTASKMVGVLLPKEFLWAVFESVQNSSNESPSFDPTFGCHGVVTPSSDDIFKLAEANACWDPEVLLCMEEDTFIRNVELLGAVKGFSRAQLMALKEKAIQVWDLPSRWKEHHIVSLGRIALALSESELEQLDLSSIDTVASLGQQTEWTPGQAKSILQAFLEDSGYGIQDLKSFHLVGFGPTLCAMDPTEIQLIKTSEFRAVVARIGTLFCSTPVLAGFKKKAEVVFGRPTEWTSSILQELGTIAAGITKAELRMLNKELMTYFQPSAIRCLPGEVFKELSTEQIASLGPQNAASVTHSQRLQLSSAQLQSLQRALDGAKTHSWQTDPLSSSPTWPASTGSPTGEPASQALWLGCTLLLLTAKS.

An N-terminal signal peptide occupies residues 1-23 (MSQGPRTCSLLLVLLLSHGGAYQ). 11 N-linked (GlcNAc...) asparagine glycosylation sites follow: Asn156, Asn211, Asn244, Asn289, Asn321, Asn380, Asn384, Asn530, Asn594, Asn740, and Asn798. The span at 1095–1115 (HSWQTDPLSSSPTWPASTGSP) shows a compositional bias: polar residues. The interval 1095-1119 (HSWQTDPLSSSPTWPASTGSPTGEP) is disordered. Gly1113 carries GPI-anchor amidated glycine lipidation. The propeptide at 1114–1137 (SPTGEPASQALWLGCTLLLLTAKS) is removed in mature form.

The protein belongs to the stereocilin family. In terms of tissue distribution, expressed in the inner ear and vestibule.

The protein localises to the apical cell membrane. It localises to the secreted. The protein resides in the extracellular space. It is found in the extracellular matrix. Its function is as follows. May act as an adhesion molecule. This chain is Otoancorin (Otoa), found in Mus musculus (Mouse).